The primary structure comprises 488 residues: Glutamyl-tRNA(Gln) amidotransferase subunit A (488 aa).

Catalysis depends on charge relay system residues Lys76 and Ser152. Catalysis depends on Ser176, which acts as the Acyl-ester intermediate.

Belongs to the amidase family. GatA subfamily. In terms of assembly, heterotrimer of A, B and C subunits.

It catalyses the reaction L-glutamyl-tRNA(Gln) + L-glutamine + ATP + H2O = L-glutaminyl-tRNA(Gln) + L-glutamate + ADP + phosphate + H(+). Its function is as follows. Allows the formation of correctly charged Gln-tRNA(Gln) through the transamidation of misacylated Glu-tRNA(Gln) in organisms which lack glutaminyl-tRNA synthetase. The reaction takes place in the presence of glutamine and ATP through an activated gamma-phospho-Glu-tRNA(Gln). The sequence is that of Glutamyl-tRNA(Gln) amidotransferase subunit A from Oceanobacillus iheyensis (strain DSM 14371 / CIP 107618 / JCM 11309 / KCTC 3954 / HTE831).